The chain runs to 393 residues: Neuroplastin (393 aa).

The first 28 residues, 1-28 (MSGSSLPGALALSLLLVSGSLLPGPGAA), serve as a signal peptide directing secretion. 3 Ig-like domains span residues 29-134 (QNAG…PSIT), 148-234 (PRIV…IEVK), and 237-327 (PDIT…ASVS). The Extracellular segment spans residues 29–338 (QNAGFVKSPM…VLRVRSHLAP (310 aa)). The cysteines at positions 52 and 116 are disulfide-linked. The tract at residues 149-161 (RIVTSEEVIIRDS) is narpin; mediates binding with FGFR1 and has antidepressant-like activity. A disulfide bond links cysteine 169 and cysteine 217. N-linked (GlcNAc...) asparagine glycans are attached at residues asparagine 170, asparagine 196, asparagine 228, asparagine 283, asparagine 295, and asparagine 316. A disulfide bridge links cysteine 258 with cysteine 315. The helical transmembrane segment at 339 to 359 (LWPFLGILAEIIILVVIIVVY) threads the bilayer. Topologically, residues 360-393 (EKRKRPDEVPDAGPMKTNSTNNHKDKNLRQRNTN) are cytoplasmic. The interval 366-393 (DEVPDAGPMKTNSTNNHKDKNLRQRNTN) is disordered.

Interacts with ATP2B1; this interaction stabilizes ATP2B1 and increases ATPase activity; this interaction controls T cell calcium homeostasis following T cell activation. Interacts with XKR8; promoting its localization at the cell membrane. Isoform 1 and isoform 2 are N-glycosylated. In terms of tissue distribution, isoform 1 is ubiquitously expressed. Isoform 2 is brain-specific. In brain isoform 2 is highly expressed in hippocampus and cerebral cortex and weakly in cerebellum and lower brain regions. In the hippocampus isoform 2 is found in the dentate gyrus and CA1-CA4, the striatum oriens of CA3 shows the higher level.

The protein resides in the cell membrane. It is found in the postsynaptic density. Functionally, probable homophilic and heterophilic cell adhesion molecule involved in long term potentiation at hippocampal excitatory synapses through activation of p38MAPK. May also regulate neurite outgrowth by activating the FGFR1 signaling pathway. May play a role in synaptic plasticity. Also acts as a chaperone for ATP2B1; stabilizes ATP2B1 and increases its ATPase activity. Promotes localization of XKR8 at the cell membrane. The protein is Neuroplastin (Nptn) of Rattus norvegicus (Rat).